Consider the following 259-residue polypeptide: Undecaprenyl-diphosphatase 4 (259 aa).

8 helical membrane passes run 1 to 21 (MNWLEAFILGIIQGLTEFLPI), 39 to 59 (AGLFLDTMLHIGTLLAVFIYY), 71 to 91 (FSKLMLLLIVGTIPAVVIGLL), 99 to 119 (ISKTGITIGWEFLVTGFFLYM), 133 to 153 (ITYKDAFIIGSFQAAAIFPAI), 174 to 194 (AYFSFLLSTPAIVGAIILQFV), 208 to 228 (SLIVGTLSAAFFGYIAVSWMI), and 239 to 259 (FAYYVWGLGILILTLQFTDVF).

The protein belongs to the UppP family.

Its subcellular location is the cell membrane. It carries out the reaction di-trans,octa-cis-undecaprenyl diphosphate + H2O = di-trans,octa-cis-undecaprenyl phosphate + phosphate + H(+). In terms of biological role, catalyzes the dephosphorylation of undecaprenyl diphosphate (UPP). Confers resistance to bacitracin. The polypeptide is Undecaprenyl-diphosphatase 4 (Bacillus cereus (strain ZK / E33L)).